Here is a 3078-residue protein sequence, read N- to C-terminus: Probable polyketide synthase 44 (3078 aa).

The 426-residue stretch at 10–435 (DNDVAIIGIG…GSNACLILTE (426 aa)) folds into the Ketosynthase family 3 (KS3) domain. Residues Cys-175, His-320, and His-358 each act as for beta-ketoacyl synthase activity in the active site. The tract at residues 627 to 660 (GILASISIGHSLGEVSSAVCSGMIDLETGCFIIY) is acyl/malonyl transferase. Ser-637 acts as the For acyl/malonyl transferase activity in catalysis. Residues 952 to 1072 (TNHLGYRNER…GRLSTTKHND (121 aa)) form an N-terminal hotdog fold region. The region spanning 952-1239 (TNHLGYRNER…YTQLTPYKNQ (288 aa)) is the PKS/mFAS DH domain. The Proton acceptor; for dehydratase activity role is filled by His-984. The interval 1088-1239 (NFVTIQKKEL…YTQLTPYKNQ (152 aa)) is C-terminal hotdog fold. The Proton donor; for dehydratase activity role is filled by Asp-1150. The stretch at 2080 to 2119 (LENIKTDLSNKNDNNNNNNNNNNDNKESNIKELLDNDDDE) forms a coiled coil. The disordered stretch occupies residues 2087-2108 (LSNKNDNNNNNNNNNNDNKESN). The span at 2090-2102 (KNDNNNNNNNNNN) shows a compositional bias: low complexity. The region spanning 2558–2636 (SDDLSIREQI…QLIQSVTDAM (79 aa)) is the Carrier domain. Ser-2596 bears the O-(pantetheine 4'-phosphoryl)serine mark. A helical transmembrane segment spans residues 2694-2714 (NTVFLTGSSGFIGIYILFYLI).

Pantetheine 4'-phosphate serves as cofactor.

Its subcellular location is the membrane. Probable polyketide synthase. The polypeptide is Probable polyketide synthase 44 (pks44) (Dictyostelium discoideum (Social amoeba)).